Here is a 151-residue protein sequence, read N- to C-terminus: Nucleoside diphosphate kinase (151 aa).

Positions 11, 59, 87, 93, 104, and 114 each coordinate ATP. His117 (pros-phosphohistidine intermediate) is an active-site residue.

It belongs to the NDK family. As to quaternary structure, homotetramer. The cofactor is Mg(2+).

It is found in the cytoplasm. It carries out the reaction a 2'-deoxyribonucleoside 5'-diphosphate + ATP = a 2'-deoxyribonucleoside 5'-triphosphate + ADP. The catalysed reaction is a ribonucleoside 5'-diphosphate + ATP = a ribonucleoside 5'-triphosphate + ADP. Its function is as follows. Major role in the synthesis of nucleoside triphosphates other than ATP. The ATP gamma phosphate is transferred to the NDP beta phosphate via a ping-pong mechanism, using a phosphorylated active-site intermediate. This is Nucleoside diphosphate kinase from Prochlorococcus marinus (strain NATL2A).